We begin with the raw amino-acid sequence, 562 residues long: MNNNKRPLYIPYAGPALLSTPLLNKGSAFSTTERKYFNLEGLLPEAIESIEEQTGRAYKQYQSFENDMDKHIYLRNIQDTNETLFYRLVQNHISEMMPIIYTPTVGAACENFSNIYRRGRGLFISYENKNRIDDLLNNAANQNVKVIVVTDGERILGLGDQGIGGMGIPIGKLALYTACGGISPAHTLPIVLDVGTNNPQRLADPMYMGWRHPRVTGDEYADFVEDFIQAVQRRWPEALVQFEDFAQKNAMPLLERYKNRICCFNDDIQGTAAVTVGSLLAACKAAGSSLSEQRVTFLGAGSAGCGIAEAIIAQMVSEGISDAQARSQVYMVDRWGLLQEGMPNLLDFQQRLVQKAENTKDWISEEPNFSLVDVMRNAKPTVLIGVSGAPGLFSKEVIQEMHKHCERPIVFPLSNPTSRVEATPNDIIRWTNGQALVATGSPFDPVSHNGQTYPIAQCNNSFIFPGIGLGVLAIKATRVTDEMLMESSRALAECSPLAINGTGALLPPLEEIHSVSKRIAFAVAKKAIEQGHALEITDEALHQKIESYFWKPVYRRYKRTAF.

Tyr101 serves as the catalytic Proton donor. Arg154 is a binding site for NAD(+). Lys172 acts as the Proton acceptor in catalysis. The a divalent metal cation site is built by Glu243, Asp244, and Asp267. Residues Asp267 and Asn415 each coordinate NAD(+).

Belongs to the malic enzymes family. Homotetramer. Mg(2+) serves as cofactor. It depends on Mn(2+) as a cofactor.

The catalysed reaction is (S)-malate + NAD(+) = pyruvate + CO2 + NADH. It catalyses the reaction oxaloacetate + H(+) = pyruvate + CO2. In Aliivibrio fischeri (strain MJ11) (Vibrio fischeri), this protein is NAD-dependent malic enzyme.